Consider the following 496-residue polypeptide: ATP synthase subunit beta, chloroplastic (496 aa).

An ATP-binding site is contributed by 170–177 (GGAGVGKT).

Belongs to the ATPase alpha/beta chains family. As to quaternary structure, F-type ATPases have 2 components, CF(1) - the catalytic core - and CF(0) - the membrane proton channel. CF(1) has five subunits: alpha(3), beta(3), gamma(1), delta(1), epsilon(1). CF(0) has four main subunits: a(1), b(1), b'(1) and c(9-12).

It localises to the plastid. The protein localises to the chloroplast thylakoid membrane. It carries out the reaction ATP + H2O + 4 H(+)(in) = ADP + phosphate + 5 H(+)(out). Functionally, produces ATP from ADP in the presence of a proton gradient across the membrane. The catalytic sites are hosted primarily by the beta subunits. The polypeptide is ATP synthase subunit beta, chloroplastic (Trachycarpus fortunei (Chinese windmill palm)).